Here is a 296-residue protein sequence, read N- to C-terminus: Adrenocorticotropic hormone receptor (296 aa).

Topologically, residues 1–23 are extracellular; it reads MKHIINSYEHTNDTARNNSDCPD. Asn-12 and Asn-17 each carry an N-linked (GlcNAc...) asparagine glycan. 2 disulfides stabilise this stretch: Cys-21-Cys-253 and Cys-245-Cys-251. A helical transmembrane segment spans residues 24 to 49; sequence VVLPEEIFFTISVIGILENLIVLLAV. At 50 to 58 the chain is on the cytoplasmic side; that stretch reads IKNKNLQSP. A helical transmembrane segment spans residues 59–79; it reads MYFFICSLAISDMLGSLYKIL. Residues 80 to 104 are Extracellular-facing; that stretch reads ENILIMFRNMGYLKPRGSFESTADD. Residues 105-126 form a helical membrane-spanning segment; that stretch reads IIDCMFILSLLGSIFSLSVIAA. The Cytoplasmic segment spans residues 127-147; sequence DRYITIFHALQYHSIVTMRRT. The helical transmembrane segment at 148-168 threads the bilayer; it reads IITLTIIWMFCTGSGITMVIF. Residues 169 to 180 are Extracellular-facing; it reads SHHIPTVLTFTS. Residues 181–199 form a helical membrane-spanning segment; that stretch reads LFPLMLVFILCLYIHMFLL. At 200-217 the chain is on the cytoplasmic side; that stretch reads ARSHARKISTLPRTNMKG. Residues 218–244 traverse the membrane as a helical segment; that stretch reads AMTLTILLGVFIFCWAPFVLHVLLMTF. The Extracellular segment spans residues 245–256; the sequence is CPNNPYCVCYMS. The chain crosses the membrane as a helical span at residues 257 to 278; that stretch reads LFQVNGMLIMCNAVIDPFIYAF. The Cytoplasmic portion of the chain corresponds to 279–296; sequence RSPELRDAFKRMLFCNRY. The S-palmitoyl cysteine moiety is linked to residue Cys-293.

It belongs to the G-protein coupled receptor 1 family. As to quaternary structure, homodimer. Interacts with corticotropin (ACTH). Interacts with MRAP; this interaction targets MC2R to the plasma membrane. Interacts with MRAP2; competing with MRAP for binding to MC2R and impairing the binding of corticotropin (ACTH). Post-translationally, ubiquitinated by MGRN1 that may be involved in post-endocytic trafficking and/or degradation of internalized receptor.

Its subcellular location is the cell membrane. In terms of biological role, hormone receptor primarily expressed in adrenal cortex that plays a key role in regulating adrenocortical function. Upon corticotropin (ACTH) binding, facilitates the release of adrenal glucocorticoids, including cortisol and corticosterone. In addition, MC2R is required for fetal and neonatal adrenal gland development. Mechanistically, activates adenylate cyclase (cAMP), the MAPK cascade as well as the cAMP-dependent protein kinase A pathway leading to steroidogenic factor 1/NR5A1-mediated transcriptional activation. This is Adrenocorticotropic hormone receptor (Mc2r) from Mus musculus (Mouse).